A 140-amino-acid chain; its full sequence is Nucleoside diphosphate kinase (140 aa).

Residues lysine 10, phenylalanine 58, arginine 86, threonine 92, arginine 103, and asparagine 113 each coordinate ATP. The active-site Pros-phosphohistidine intermediate is the histidine 116.

Belongs to the NDK family. In terms of assembly, homotetramer. Mg(2+) is required as a cofactor.

The protein resides in the cytoplasm. The catalysed reaction is a 2'-deoxyribonucleoside 5'-diphosphate + ATP = a 2'-deoxyribonucleoside 5'-triphosphate + ADP. It catalyses the reaction a ribonucleoside 5'-diphosphate + ATP = a ribonucleoside 5'-triphosphate + ADP. Functionally, major role in the synthesis of nucleoside triphosphates other than ATP. The ATP gamma phosphate is transferred to the NDP beta phosphate via a ping-pong mechanism, using a phosphorylated active-site intermediate. This chain is Nucleoside diphosphate kinase, found in Haemophilus influenzae (strain PittEE).